The following is a 143-amino-acid chain: Transcriptional regulator MraZ (143 aa).

SpoVT-AbrB domains lie at 5-47 (EYHH…PIEE) and 76-119 (AMES…SAER).

This sequence belongs to the MraZ family. As to quaternary structure, forms oligomers.

The protein localises to the cytoplasm. It is found in the nucleoid. This chain is Transcriptional regulator MraZ, found in Lactobacillus gasseri (strain ATCC 33323 / DSM 20243 / BCRC 14619 / CIP 102991 / JCM 1131 / KCTC 3163 / NCIMB 11718 / NCTC 13722 / AM63).